The chain runs to 393 residues: Beta-1,3-galactosyltransferase 7 (393 aa).

A helical; Signal-anchor for type II membrane protein membrane pass occupies residues 9–29 (VISLKWVPFLCISFFALGAIF). The interval 89–112 (SLDKSVSTLSSTRSSQEMVDGSET) is disordered. The span at 93–103 (SVSTLSSTRSS) shows a compositional bias: low complexity.

This sequence belongs to the glycosyltransferase 31 family. Requires Mn(2+) as cofactor. In terms of tissue distribution, expressed in leaves, stems, flowers and siliques.

Its subcellular location is the golgi apparatus membrane. The protein operates within protein modification; protein glycosylation. In terms of biological role, beta-1,3-galactosyltransferase that transfers galactose from UDP-galactose to substrates with a terminal glycosyl residue. In Arabidopsis thaliana (Mouse-ear cress), this protein is Beta-1,3-galactosyltransferase 7 (B3GALT7).